The following is a 524-amino-acid chain: MAAMAVALRGLGGRFRWRTQAVAGGVRGAARGAAAGQRDYDLLVVGGGSGGLACAKEAAQLGRKVAVVDYVEPSPQGTRWGLGGTCVNVGCIPKKLMHQAALLGGLIQDAPNYGWEVAQPVPHDWRKMAEAVQNHVKSLNWGHRVQLQDRKVKYFNIKASFVDEHTVCGVAKGGKEILLSADHIIIATGGRPRYPTHIEGALEYGITSDDIFWLKESPGKTLVVGASYVALECAGFLTGIGLDTTIMMRSIPLRGFDQQMSSMVIEHMASHGTRFLRGCAPSRVRRLPDGQLQVTWEDSTTGKEDTGTFDTVLWAIGRVPDTRSLNLEKAGVDTSPDTQKILVDSREATSVPHIYAIGDVVEGRPELTPIAIMAGRLLVQRLFGGSSDLMDYDNVPTTVFTPLEYGCVGLSEEEAVARHGQEHVEVYHAHYKPLEFTVAGRDASQCYVKMVCLREPPQLVLGLHFLGPNAGEVTQGFALGIKCGASYAQVMRTVGIHPTCSEEVVKLRISKRSGLDPTVTGCUG.

A mitochondrion-targeting transit peptide spans 1–36 (MAAMAVALRGLGGRFRWRTQAVAGGVRGAARGAAAG). Residue 41–70 (DLLVVGGGSGGLACAKEAAQLGRKVAVVDY) coordinates FAD. The cysteines at positions 86 and 91 are disulfide-linked. 2 positions are modified to N6-succinyllysine: lysine 175 and lysine 329. Histidine 497 acts as the Proton acceptor in catalysis. A cross-link (cysteinyl-selenocysteine (Cys-Sec)) is located at residues 522–523 (CU). A non-standard amino acid (selenocysteine) is located at residue selenocysteine 523.

This sequence belongs to the class-I pyridine nucleotide-disulfide oxidoreductase family. Homodimer. The cofactor is FAD. As to expression, highly expressed in the prostate, ovary, liver, testis, uterus, colon and small intestine. Intermediate levels in brain, skeletal muscle, heart and spleen. Low levels in placenta, pancreas, thymus and peripheral blood leukocytes. According to PubMed:10608886, high levels in kidney, whereas according to PubMed:9923614, levels are low. High expression is observed in the adrenal cortex.

It is found in the mitochondrion. It carries out the reaction [thioredoxin]-dithiol + NADP(+) = [thioredoxin]-disulfide + NADPH + H(+). Involved in the control of reactive oxygen species levels and the regulation of mitochondrial redox homeostasis. Maintains thioredoxin in a reduced state. May play a role in redox-regulated cell signaling. The protein is Thioredoxin reductase 2, mitochondrial of Homo sapiens (Human).